A 487-amino-acid chain; its full sequence is Serine/threonine-protein kinase 4 (487 aa).

At Met1 the chain carries N-acetylmethionine. Phosphothreonine is present on Thr3. The Protein kinase domain maps to 30 to 281 (FDVLEKLGEG…ATQLLQHPFV (252 aa)). ATP-binding positions include 36–44 (LGEGSYGSV) and Lys59. Asp149 acts as the Proton acceptor in catalysis. At Thr183 the chain carries Phosphothreonine; by autocatalysis. Ser265 is subject to Phosphoserine. Positions 289-311 (ILRDLINEAMDVKLKRQEAQQRE) form a coiled coil. A disordered region spans residues 305 to 334 (QEAQQREVDQDDEENSEEDEMDSGTMVRAA). Positions 313-326 (DQDDEENSEEDEMD) are enriched in acidic residues. Ser320 carries the post-translational modification Phosphoserine. Phosphothreonine is present on residues Thr340 and Thr367. Thr387 carries the post-translational modification Phosphothreonine; by PKB/AKT1. Ser410 carries the post-translational modification Phosphoserine. Residue Tyr433 is modified to Phosphotyrosine. In terms of domain architecture, SARAH spans 433-480 (YEFLKSWTVEDLQKRLLALDPMMEQEMEEIRQKYRSKRQPILDAIEAK).

It belongs to the protein kinase superfamily. STE Ser/Thr protein kinase family. STE20 subfamily. In terms of assembly, homodimer; mediated via the coiled-coil region. Interacts with NORE1, which inhibits autoactivation. Interacts with and stabilizes SAV1. Interacts with RASSF1. Interacts with FOXO3. Interacts with RASSF2 (via SARAH domain). Interacts with AR, PKB/AKT1, TNNI3 and SIRT1. Interacts with MARK3 and SCRIB in the presence of DLG5. Interacts with DLG5 (via PDZ domain 3). Mg(2+) serves as cofactor. Post-translationally, autophosphorylated on serine and threonine residues. Phosphorylation at Thr-387 by PKB/AKT1, leads to inhibition of its: kinase activity, nuclear translocation and autophosphorylation at Thr-183. It also diminishes its cleavage by caspases and its ability to phosphorylate FOXO3. In terms of processing, proteolytically cleaved by caspase-3 during apoptosis at Asp-326 resulting in a 37 kDa form. Proteolytic cleavage results in kinase activation and nuclear translocation of the truncated form (MST1/N).

The protein resides in the cytoplasm. It is found in the nucleus. It catalyses the reaction L-seryl-[protein] + ATP = O-phospho-L-seryl-[protein] + ADP + H(+). The enzyme catalyses L-threonyl-[protein] + ATP = O-phospho-L-threonyl-[protein] + ADP + H(+). Inhibited by the C-terminal non-catalytic region. Activated by caspase-cleavage. Full activation also requires homodimerization and autophosphorylation of Thr-183. Activated by RASSF1 which acts by preventing its dephosphorylation. Its function is as follows. Stress-activated, pro-apoptotic kinase which, following caspase-cleavage, enters the nucleus and induces chromatin condensation followed by internucleosomal DNA fragmentation. Key component of the Hippo signaling pathway which plays a pivotal role in organ size control and tumor suppression by restricting proliferation and promoting apoptosis. The core of this pathway is composed of a kinase cascade wherein STK3/MST2 and STK4/MST1, in complex with its regulatory protein SAV1, phosphorylates and activates LATS1/2 in complex with its regulatory protein MOB1, which in turn phosphorylates and inactivates YAP1 oncoprotein and WWTR1/TAZ. Phosphorylation of YAP1 by LATS2 inhibits its translocation into the nucleus to regulate cellular genes important for cell proliferation, cell death, and cell migration. STK3/MST2 and STK4/MST1 are required to repress proliferation of mature hepatocytes, to prevent activation of facultative adult liver stem cells (oval cells), and to inhibit tumor formation. Phosphorylates 'Ser-14' of histone H2B (H2BS14ph) during apoptosis. Phosphorylates FOXO3 upon oxidative stress, which results in its nuclear translocation and cell death initiation. Phosphorylates MOBKL1A, MOBKL1B and RASSF2. Phosphorylates TNNI3 (cardiac Tn-I) and alters its binding affinity to TNNC1 (cardiac Tn-C) and TNNT2 (cardiac Tn-T). Phosphorylates FOXO1 on 'Ser-212' and regulates its activation and stimulates transcription of PMAIP1 in a FOXO1-dependent manner. Phosphorylates SIRT1 and inhibits SIRT1-mediated p53/TP53 deacetylation, thereby promoting p53/TP53 dependent transcription and apoptosis upon DNA damage. Acts as an inhibitor of PKB/AKT1. Phosphorylates AR on 'Ser-650' and suppresses its activity by intersecting with PKB/AKT1 signaling and antagonizing formation of AR-chromatin complexes. The sequence is that of Serine/threonine-protein kinase 4 (Stk4) from Mus musculus (Mouse).